We begin with the raw amino-acid sequence, 80 residues long: uncharacterized protein (80 aa).

This sequence to M.leprae U650M.

This is an uncharacterized protein from Mycobacterium bovis (strain ATCC BAA-935 / AF2122/97).